The following is a 161-amino-acid chain: Transcription elongation factor GreA (161 aa).

Belongs to the GreA/GreB family.

Its function is as follows. Necessary for efficient RNA polymerase transcription elongation past template-encoded arresting sites. The arresting sites in DNA have the property of trapping a certain fraction of elongating RNA polymerases that pass through, resulting in locked ternary complexes. Cleavage of the nascent transcript by cleavage factors such as GreA or GreB allows the resumption of elongation from the new 3'terminus. GreA releases sequences of 2 to 3 nucleotides. This Desulfotalea psychrophila (strain LSv54 / DSM 12343) protein is Transcription elongation factor GreA.